A 267-amino-acid chain; its full sequence is Hydroxyethylthiazole kinase (267 aa).

A substrate-binding site is contributed by Met-46. ATP contacts are provided by Arg-122 and Ser-168. Gly-195 lines the substrate pocket.

The protein belongs to the Thz kinase family. Requires Mg(2+) as cofactor.

It carries out the reaction 5-(2-hydroxyethyl)-4-methylthiazole + ATP = 4-methyl-5-(2-phosphooxyethyl)-thiazole + ADP + H(+). Its pathway is cofactor biosynthesis; thiamine diphosphate biosynthesis; 4-methyl-5-(2-phosphoethyl)-thiazole from 5-(2-hydroxyethyl)-4-methylthiazole: step 1/1. Functionally, catalyzes the phosphorylation of the hydroxyl group of 4-methyl-5-beta-hydroxyethylthiazole (THZ). This Nitratidesulfovibrio vulgaris (strain ATCC 29579 / DSM 644 / CCUG 34227 / NCIMB 8303 / VKM B-1760 / Hildenborough) (Desulfovibrio vulgaris) protein is Hydroxyethylthiazole kinase.